Consider the following 143-residue polypeptide: uncharacterized protein (143 aa).

Positions 1–24 (MKKMLMLAFTFLLALTIHVGEASA) are cleaved as a signal peptide.

This is an uncharacterized protein from Bacillus subtilis (strain 168).